The sequence spans 157 residues: MPHRQKLAKIELVEKYQVRRAAEVEHERAVAVYDLLEENYFAPNGDFIGPYALYIKLEDTRLIFDVRKEDETPLVQVPLPLKTFQSIVKDYFMICESYFAAIKKSTPSQIEAIDMGRRGLHNEGSELLRERLGGKIDVDFDTARRLFTLICVLHIRG.

The protein belongs to the UPF0262 family.

The sequence is that of UPF0262 protein amb3341 from Paramagnetospirillum magneticum (strain ATCC 700264 / AMB-1) (Magnetospirillum magneticum).